The primary structure comprises 204 residues: Holliday junction branch migration complex subunit RuvA (204 aa).

Residues 1 to 64 are domain I; it reads MFAFLRGELV…EDLQQLFGFL (64 aa). Residues 65-143 are domain II; it reads DEEELQLFRL…KIQPTSSAKA (79 aa). The segment at 144-151 is flexible linker; the sequence is GAPSAVLS. Residues 151–204 form a domain III region; that stretch reads SATQLIDDAVAALTTLGFPKASAQKAVSKVLETTPGLSVEELVRTSLAAMHNNL.

It belongs to the RuvA family. In terms of assembly, homotetramer. Forms an RuvA(8)-RuvB(12)-Holliday junction (HJ) complex. HJ DNA is sandwiched between 2 RuvA tetramers; dsDNA enters through RuvA and exits via RuvB. An RuvB hexamer assembles on each DNA strand where it exits the tetramer. Each RuvB hexamer is contacted by two RuvA subunits (via domain III) on 2 adjacent RuvB subunits; this complex drives branch migration. In the full resolvosome a probable DNA-RuvA(4)-RuvB(12)-RuvC(2) complex forms which resolves the HJ.

It localises to the cytoplasm. Its function is as follows. The RuvA-RuvB-RuvC complex processes Holliday junction (HJ) DNA during genetic recombination and DNA repair, while the RuvA-RuvB complex plays an important role in the rescue of blocked DNA replication forks via replication fork reversal (RFR). RuvA specifically binds to HJ cruciform DNA, conferring on it an open structure. The RuvB hexamer acts as an ATP-dependent pump, pulling dsDNA into and through the RuvAB complex. HJ branch migration allows RuvC to scan DNA until it finds its consensus sequence, where it cleaves and resolves the cruciform DNA. In Chlorobaculum parvum (strain DSM 263 / NCIMB 8327) (Chlorobium vibrioforme subsp. thiosulfatophilum), this protein is Holliday junction branch migration complex subunit RuvA.